A 180-amino-acid polypeptide reads, in one-letter code: Large ribosomal subunit protein uL6 (180 aa).

The protein belongs to the universal ribosomal protein uL6 family. As to quaternary structure, part of the 50S ribosomal subunit.

Functionally, this protein binds to the 23S rRNA, and is important in its secondary structure. It is located near the subunit interface in the base of the L7/L12 stalk, and near the tRNA binding site of the peptidyltransferase center. The chain is Large ribosomal subunit protein uL6 from Anaeromyxobacter dehalogenans (strain 2CP-1 / ATCC BAA-258).